Reading from the N-terminus, the 234-residue chain is Peroxiredoxin-2E, chloroplastic (234 aa).

The transit peptide at 1-70 (MATSLSVSRF…TRSFATTPVT (70 aa)) directs the protein to the chloroplast. The region spanning 73–234 (ISVGDKLPDS…SSAEDMLKAL (162 aa)) is the Thioredoxin domain. The residue at position 82 (Ser-82) is a Phosphoserine. Cys-121 acts as the Cysteine sulfenic acid (-SOH) intermediate in catalysis.

The protein belongs to the peroxiredoxin family. Prx5 subfamily. Monomer. As to expression, expressed in all tissues but predominantly in buds, siliques and seeds.

It is found in the plastid. The protein localises to the chloroplast stroma. The catalysed reaction is [glutaredoxin]-dithiol + a hydroperoxide = [glutaredoxin]-disulfide + an alcohol + H2O. Functionally, thiol-specific peroxidase that catalyzes the reduction of hydrogen peroxide and organic hydroperoxides to water and alcohols, respectively. Plays a role in cell protection against oxidative stress by detoxifying peroxides. May be involved in chloroplast redox homeostasis. This chain is Peroxiredoxin-2E, chloroplastic (PRXIIE), found in Arabidopsis thaliana (Mouse-ear cress).